The primary structure comprises 57 residues: Protein GnsA (57 aa).

The protein belongs to the gns family.

This chain is Protein GnsA (gnsA), found in Escherichia coli O6:H1 (strain CFT073 / ATCC 700928 / UPEC).